A 624-amino-acid chain; its full sequence is Phosphomethylpyrimidine synthase (624 aa).

The interval 40–61 (VPMRKISQSDTPTNTGREKNPP) is disordered. A compositionally biased stretch (polar residues) spans 45–54 (ISQSDTPTNT). Substrate-binding positions include Asn229, Met258, Tyr287, His323, 343–345 (SRG), 384–387 (DGLR), and Glu423. Residue His427 participates in Zn(2+) binding. Tyr450 contributes to the substrate binding site. His491 provides a ligand contact to Zn(2+). Residues Cys571, Cys574, and Cys579 each contribute to the [4Fe-4S] cluster site.

It belongs to the ThiC family. Homodimer. It depends on [4Fe-4S] cluster as a cofactor.

The catalysed reaction is 5-amino-1-(5-phospho-beta-D-ribosyl)imidazole + S-adenosyl-L-methionine = 4-amino-2-methyl-5-(phosphooxymethyl)pyrimidine + CO + 5'-deoxyadenosine + formate + L-methionine + 3 H(+). It functions in the pathway cofactor biosynthesis; thiamine diphosphate biosynthesis. Its function is as follows. Catalyzes the synthesis of the hydroxymethylpyrimidine phosphate (HMP-P) moiety of thiamine from aminoimidazole ribotide (AIR) in a radical S-adenosyl-L-methionine (SAM)-dependent reaction. The chain is Phosphomethylpyrimidine synthase from Methylococcus capsulatus (strain ATCC 33009 / NCIMB 11132 / Bath).